The primary structure comprises 839 residues: Taste receptor type 1 member 2 (839 aa).

An N-terminal signal peptide occupies residues 1 to 19 (MGPRAKTISSLFFLLWVLA). Residues 20 to 566 (EPAENSDFYL…VFLEWHEAPT (547 aa)) lie on the Extracellular side of the membrane. 8 N-linked (GlcNAc...) asparagine glycosylation sites follow: Asn-84, Asn-248, Asn-292, Asn-312, Asn-368, Asn-428, Asn-487, and Asn-527. Residues 567 to 587 (IAVALLAALGFLSTLAILVIF) traverse the membrane as a helical segment. Residues 588–602 (WRHFQTPIVRSAGGP) lie on the Cytoplasmic side of the membrane. Residues 603–623 (MCFLMLTLLLVAYMVVPVYVG) form a helical membrane-spanning segment. Over 624–635 (PPKVSTCLCRQA) the chain is Extracellular. The chain crosses the membrane as a helical span at residues 636-656 (LFPLCFTICISCIAVRSFQIV). Residues 657–681 (CAFKMASRFPRAYSYWVRYQGPYVS) lie on the Cytoplasmic side of the membrane. A helical membrane pass occupies residues 682 to 702 (MAFITVLKMVIVVIGMLATGL). Residues 703–727 (SPTTRTDPDDPKITIVSCNPNYRNS) lie on the Extracellular side of the membrane. A helical membrane pass occupies residues 728 to 748 (LLFNTSLDLLLSVVGFSFAYM). The Cytoplasmic segment spans residues 749 to 760 (GKELPTNYNEAK). A helical transmembrane segment spans residues 761 to 781 (FITLSMTFYFTSSVSLCTFMS). Residues 782–784 (AYS) lie on the Extracellular side of the membrane. The helical transmembrane segment at 785–805 (GVLVTIVDLLVTVLNLLAISL) threads the bilayer. Residues 806–839 (GYFGPKCYMILFYPERNTPAYFNSMIQGYTMRRD) lie on the Cytoplasmic side of the membrane.

The protein belongs to the G-protein coupled receptor 3 family. TAS1R subfamily. Forms heterodimers with TAS1R3.

The protein resides in the cell membrane. In terms of biological role, putative taste receptor. TAS1R2/TAS1R3 recognizes diverse natural and synthetic sweeteners. The protein is Taste receptor type 1 member 2 (TAS1R2) of Homo sapiens (Human).